The sequence spans 445 residues: StAR-related lipid transfer protein 3 (445 aa).

The Cytoplasmic portion of the chain corresponds to 1 to 51 (MSKLPRELTRDLERSLPAVASLGSSLSHSQSLSSHLLPPPEKRRAISDVRR). The 172-residue stretch at 46–217 (ISDVRRTFCL…YSPPESFAGS (172 aa)) folds into the MENTAL domain. Residues 52–72 (TFCLFVTFDLLFISLLWIIEL) form a helical membrane-spanning segment. Topologically, residues 73-94 (NTNTGIRKNLEQEIIQYNFKTS) are extracellular. The chain crosses the membrane as a helical span at residues 95–115 (FFDIFVLAFFRFSGLLLGYAV). Residues 116–120 (LRLRH) lie on the Cytoplasmic side of the membrane. Residues 121–141 (WWVIAVTTLVSSAFLIVKVIL) traverse the membrane as a helical segment. The Extracellular portion of the chain corresponds to 142-148 (SELLSKG). A helical transmembrane segment spans residues 149–169 (AFGYLLPIVSFVLAWLETWFL). Topologically, residues 170–445 (DFKVLPQEAE…QRISELGARA (276 aa)) are cytoplasmic. Positions 206-212 (QFYSPPE) match the FFAT motif. Serine 209 bears the Phosphoserine mark. One can recognise an START domain in the interval 230 to 443 (SFSAQEREYI…LRQRISELGA (214 aa)).

Belongs to the STARD3 family. In terms of assembly, homodimer. Interacts (via the MENTAL domain) with STARD3NL. Interacts (via phosphorylated FFAT motif) with VAPA (via MSP domain). Interacts (via phosphorylated FFAT motif) with VAPB (via MSP domain). Interacts (via phosphorylated FFAT motif) with MOSPD2 (via MSP domain); this interaction allows enrichment of MOSPD2 around endosomes. In terms of processing, phosphorylation at Ser-209 is necessary and sufficient for the direct interaction of the phosphorylated FFAT motif with the MSP domain of MOSPD2, VAPA and VAPB and allows the tethering of two membranes that participates in the formation of ER-endosome contacts. Phosphorylation of the FFAT motif leads to conformation changes. Additional phosphorylations around the core FFAT motif (QFYSPPE) are not essential but strengthen the interaction with MOSPD2, VAPA and VAPB. Phosphorylation at Ser-209 of FFAT motif drives membrane tethering between the endoplasmic reticulum and late endosomes via interaction with VAPA and VAPB that in turn allows the efficient transport of sterol mediated by the START domain. In terms of tissue distribution, expressed in retina.

Its subcellular location is the late endosome membrane. The catalysed reaction is cholesterol(in) = cholesterol(out). Sterol-binding protein that mediates cholesterol transport from the endoplasmic reticulum to endosomes. The sterol transport mechanism is triggered by phosphorylation of FFAT motif that leads to membrane tethering between the endoplasmic reticulum and late endosomes via interaction with VAPA and VAPB. Acts as a lipid transfer protein that redirects sterol to the endosome at the expense of the cell membrane and favors membrane formation inside endosomes. May also mediate cholesterol transport between other membranes, such as mitochondria membrane or cell membrane. However, such results need additional experimental evidences; probably mainly mediates cholesterol transport from the endoplasmic reticulum to endosomes. Does not activate transcriptional cholesterol sensing. Able to bind other lipids, such as lutein, a xanthophyll carotenoids that form the macular pigment of the retina. The sequence is that of StAR-related lipid transfer protein 3 from Homo sapiens (Human).